The following is a 364-amino-acid chain: DNA replication and repair protein RecF (364 aa).

30 to 37 serves as a coordination point for ATP; the sequence is GNNAQGKT.

Belongs to the RecF family.

It is found in the cytoplasm. Functionally, the RecF protein is involved in DNA metabolism; it is required for DNA replication and normal SOS inducibility. RecF binds preferentially to single-stranded, linear DNA. It also seems to bind ATP. The chain is DNA replication and repair protein RecF from Clostridium botulinum (strain Loch Maree / Type A3).